Reading from the N-terminus, the 282-residue chain is MKLLRYGPPGQEKPGILDAAGRIRDLSAHVPDLAGEVLSDAGLARLRAIDPATLPLVSGEPRIGACVGHVGKFIGIGLNYADHAAEAGMPVPKEPVVFGKWTSSICGPNDGIDIPKGSVKTDWEVELGVVIGAKCKDVDEARALDYVAGYCVVNDVSEREWQIERGGQWDKGKGFDTFGPIGPWLVTRDEVPDPQRLDLWLEIDGHRYQNGNTRTMVFTVAQLIAYLSTCMTLQPGDVITTGTPPGVGMGIKPSPVFLKAGQMVRLGIDGLGEQLQSTRHAQ.

Residues glutamate 124, glutamate 126, and aspartate 155 each coordinate Mg(2+).

Belongs to the FAH family. Requires Mg(2+) as cofactor.

This is Putative hydrolase BceJ2315_61450 from Burkholderia cenocepacia (strain ATCC BAA-245 / DSM 16553 / LMG 16656 / NCTC 13227 / J2315 / CF5610) (Burkholderia cepacia (strain J2315)).